We begin with the raw amino-acid sequence, 452 residues long: Membrane-bound acylglycerophosphatidylinositol O-acyltransferase mboa-7 (452 aa).

4 helical membrane passes run 4-24 (IIGLMSRDDWVYTGLLLFSFA), 53-73 (PRIAYSLGICAIAVGIQAFAP), 79-99 (FYVFLTTFTYLMFVRFAHYFL), and 104-124 (VASHTNVIQLIITLRIIGITF). Asn-137 carries N-linked (GlcNAc...) asparagine glycosylation. 3 consecutive transmembrane segments (helical) span residues 153-173 (FAYFYHFCGLFTGPYYTYQML), 220-240 (AIWEVSFFTRLVYAALIFVVF), and 244-264 (VYSAWAIAESICVILGIGIYP). Residue Asn-319 is glycosylated (N-linked (GlcNAc...) asparagine). His-350 is a catalytic residue. A helical membrane pass occupies residues 354–374 (AGYFMSFGVVAMCAILEDVIF). N-linked (GlcNAc...) asparagine glycosylation occurs at Asn-414. The chain crosses the membrane as a helical span at residues 421-441 (FWSSIYYWLPLLCVPFYIYSV).

This sequence belongs to the membrane-bound acyltransferase family.

It is found in the membrane. The enzyme catalyses a 1-acyl-sn-glycero-3-phospho-(1D-myo-inositol) + an acyl-CoA = a 1,2-diacyl-sn-glycero-3-phospho-(1D-myo-inositol) + CoA. It catalyses the reaction a fatty acyl-[ACP] + a 1-acyl-sn-glycero-3-phosphate = a 1,2-diacyl-sn-glycero-3-phosphate + holo-[ACP]. It functions in the pathway lipid metabolism; phospholipid metabolism. In terms of biological role, acyltransferase which mediates the conversion of lysophosphatidylinositol (1-acylglycerophosphatidylinositol or LPI) into phosphatidylinositol (1,2-diacyl-sn-glycero-3-phosphoinositol or PI) (LPIAT activity). Prefers arachidonoyl-CoA or eicosapentaenoic acid (EPA) as the acyl donor. Prefers sn-2-LPI rather than sn-1-LPI as the acyl acceptor. Lysophospholipid acyltransferases (LPLATs) catalyze the reacylation step of the phospholipid remodeling pathway also known as the Lands cycle. The sequence is that of Membrane-bound acylglycerophosphatidylinositol O-acyltransferase mboa-7 from Caenorhabditis briggsae.